Reading from the N-terminus, the 79-residue chain is UPF0180 protein BCB4264_A1446 (79 aa).

The protein belongs to the UPF0180 family.

This chain is UPF0180 protein BCB4264_A1446, found in Bacillus cereus (strain B4264).